A 710-amino-acid chain; its full sequence is Polyribonucleotide nucleotidyltransferase (710 aa).

Mg(2+) is bound by residues Asp501 and Asp507. Positions 568 to 628 (PKVQMFQIKP…ETVKQAILFI (61 aa)) constitute a KH domain. The S1 motif domain occupies 638-710 (NSIYHAHISR…RIDFVLISKK (73 aa)).

Belongs to the polyribonucleotide nucleotidyltransferase family. Mg(2+) serves as cofactor.

It is found in the cytoplasm. It catalyses the reaction RNA(n+1) + phosphate = RNA(n) + a ribonucleoside 5'-diphosphate. In terms of biological role, involved in mRNA degradation. Catalyzes the phosphorolysis of single-stranded polyribonucleotides processively in the 3'- to 5'-direction. The sequence is that of Polyribonucleotide nucleotidyltransferase from Phytoplasma australiense.